The following is a 338-amino-acid chain: Glyceraldehyde-3-phosphate dehydrogenase (338 aa).

Residues 12 to 13 (RI), D34, and R79 each bind NAD(+). Residues 150–152 (SCT), T181, 210–211 (TG), and R233 each bind D-glyceraldehyde 3-phosphate. The Nucleophile role is filled by C151. N315 provides a ligand contact to NAD(+).

This sequence belongs to the glyceraldehyde-3-phosphate dehydrogenase family. Homotetramer.

The protein resides in the cytoplasm. It catalyses the reaction D-glyceraldehyde 3-phosphate + phosphate + NAD(+) = (2R)-3-phospho-glyceroyl phosphate + NADH + H(+). It participates in carbohydrate degradation; glycolysis; pyruvate from D-glyceraldehyde 3-phosphate: step 1/5. The protein is Glyceraldehyde-3-phosphate dehydrogenase (GPD) of Sordaria macrospora.